A 2090-amino-acid polypeptide reads, in one-letter code: Nuclear pore complex protein Nup214 (2090 aa).

The residue at position 2 (Gly-2) is an N-acetylglycine. Residue Ser-30 is modified to Phosphoserine. Blade repeat units lie at residues 41 to 93 (LLAV…PMKF), 94 to 150 (PIHH…DAGG), 151 to 193 (MVID…PSTV), 194 to 239 (AVTS…ESDH), 240 to 303 (PVRV…ERQH), 304 to 359 (HYYL…KSDD), and 360 to 404 (SLPM…FYMI). Residues 41 to 404 (LLAVSNKYGL…DGVLCPFYMI (364 aa)) are seven-bladed beta propeller. The 44 X 2 AA repeats of F-G stretch occupies residues 236–1418 (ESDHPVRVLD…AVFGSLPVTS (1183 aa)). A Phosphothreonine modification is found at Thr-416. Phosphoserine occurs at positions 421, 430, and 433. A disordered region spans residues 422–460 (LEGERQPKSPGSTPTTPTSSQAPQKLDASAAAAPASLPP). Residues 429-441 (KSPGSTPTTPTSS) show a composition bias toward low complexity. Phosphothreonine is present on residues Thr-434, Thr-437, and Thr-439. Residues 450-586 (SAAAAPASLP…PPSTSAVKVN (137 aa)) form a (Microbial infection) Binds human adenovirus 5 (HAdV-5) protein L3 (hexon) region. The interval 481–2076 (VFSFGSSSLK…GSGTGGFSFG (1596 aa)) is 11 X 5 AA approximate repeats. The stretch at 484-485 (FG) is repeat 1. Composition is skewed to low complexity over residues 489–513 (LKSS…KAAP) and 524–536 (PPSK…TPAA). The segment at 489–536 (LKSSATVTGEPPSYSSGSDSSKAAPGPGPSTFSFVPPSKASLAPTPAA) is disordered. Residues 548–549 (FG) form repeat 2. Composition is skewed to low complexity over residues 597-629 (STPV…HPTP) and 637-658 (VPLK…SSSP). The segment at 597 to 700 (STPVSSSQSA…KQGHQWKDSD (104 aa)) is disordered. Phosphoserine occurs at positions 651, 657, and 666. Thr-670 is modified (phosphothreonine). Ser-678 carries the post-translational modification Phosphoserine. Residues 680–1209 (QAKSLQPAVA…VTSTPSASGQ (530 aa)) are a coiled coil. Basic and acidic residues predominate over residues 691–700 (KQGHQWKDSD). Leucine-zipper regions lie at residues 740 to 768 (LRTE…ISSL) and 861 to 882 (LANN…VDSL). The residue at position 760 (Ser-760) is a Phosphoserine. Phosphoserine occurs at positions 940, 970, 974, and 989. Positions 987–1009 (TSSVSQSLESEDARTSCKDDEAV) are disordered. The span at 997 to 1007 (EDARTSCKDDE) shows a compositional bias: basic and acidic residues. Thr-1021 bears the Phosphothreonine mark. 4 positions are modified to phosphoserine: Ser-1023, Ser-1045, Ser-1056, and Ser-1081. The segment covering 1128-1149 (LKNNPATPSTAMGSSVPYSTAK) has biased composition (polar residues). A disordered region spans residues 1128-1152 (LKNNPATPSTAMGSSVPYSTAKTPH). 3 positions are modified to phosphothreonine: Thr-1134, Thr-1150, and Thr-1156. 2 stretches are compositionally biased toward polar residues: residues 1168 to 1188 (LINS…SSGD) and 1199 to 1213 (AVTS…FSKP). Residues 1168–1213 (LINSLKPSGPTPASGQLSSGDKASGTAKIETAVTSTPSASGQFSKP) are disordered. Ser-1181 bears the Phosphoserine mark. The stretch at 1225-1226 (FG) is repeat 3. Polar residues-rich tracts occupy residues 1234–1254 (SNFT…QPDA) and 1273–1285 (PPSG…NTTP). Disordered regions lie at residues 1234–1316 (SNFT…PPSK) and 1337–1408 (LRVG…TSST). The segment covering 1288–1299 (PAASSSRPVAPS) has biased composition (low complexity). A compositionally biased stretch (polar residues) spans 1301–1310 (TALSTTSSKL). The residue at position 1312 (Thr-1312) is a Phosphothreonine. The span at 1347-1368 (KPTNKASSTSLTSTQPTKTSGV) shows a compositional bias: polar residues. A Phosphoserine modification is found at Ser-1353. The span at 1386–1408 (PPVTSSATTTSVAPPAATSTSST) shows a compositional bias: low complexity. Residues 1409–2084 (AVFGSLPVTS…FGSNNSSVQG (676 aa)) form an 18 X 4 AA approximate repeats region. Tandem repeats lie at residues 1411–1412 (FG), 1427–1428 (FG), 1441–1442 (FG), and 1473–1474 (FG). An 11 X 3 AA approximate repeats region spans residues 1427–2085 (FGGTSLSAGK…GSNNSSVQGF (659 aa)). A compositionally biased stretch (polar residues) spans 1438 to 1450 (SFSFGSQQTNSTV). The disordered stretch occupies residues 1438 to 1467 (SFSFGSQQTNSTVPPSAPPPTTAATPLPTS). Low complexity-rich tracts occupy residues 1479 to 1489 (SATTPSLPMSA) and 1508 to 1527 (SEVS…AQLP). Residues 1479–1539 (SATTPSLPMS…PPQTSDSVKK (61 aa)) form a disordered region. A Glycyl lysine isopeptide (Lys-Gly) (interchain with G-Cter in SUMO2) cross-link involves residue Lys-1538. A run of 18 repeats spans residues 1635–1636 (FG), 1674–1675 (FG), 1686–1687 (FG), 1713–1714 (FG), 1721–1722 (FG), 1726–1727 (FG), 1732–1733 (FG), 1756–1757 (FG), 1772–1773 (FG), 1786–1787 (FG), 1798–1799 (FG), 1806–1807 (FG), 1812–1813 (FG), 1819–1820 (FG), 1842–1843 (FG), 1851–1852 (FG), 1862–1863 (FG), and 1874–1875 (FG). Positions 1884–1903 (GFFSGLGGKPSQDAANKNPF) are disordered. 5 tandem repeats follow at residues 1910–1911 (FG), 1922–1923 (FG), 1930–1931 (FG), 1938–1939 (FG), and 1959–1960 (FG). At Ser-1963 the chain carries Phosphoserine. A run of 3 repeats spans residues 1970–1971 (FG), 1976–1977 (FG), and 1982–1983 (FG). A Phosphoserine modification is found at Ser-1985. 11 tandem repeats follow at residues 1988–1989 (FG), 1994–1995 (FG), 2012–2013 (FG), 2024–2025 (FG), 2026–2027 (FG), 2035–2036 (FG), 2046–2047 (FG), 2056–2057 (FG), 2066–2067 (FG), 2075–2076 (FG), and 2085–2086 (FG).

Homodimer. Part of the nuclear pore complex (NPC). Interacts with NUP88. Interacts with ZFP36; this interaction increases upon lipopolysaccharide (LPS) stimulation. Interacts with DDX19. Interacts with XPO1. Interacts with XPO5. In terms of assembly, (Microbial infection) Interacts with human herpes virus 1 (HHV-1) protein UL25; this interaction might be essential to the capsid docking onto the host nuclear pore. As to quaternary structure, (Microbial infection) Interacts (via N-terminus) with human adenovirus 5 (HAdV-5) protein L3 (hexon); this interaction might be essential for the release of the virus genome to the nucleus. In terms of processing, probably glycosylated as it reacts with wheat germ agglutinin (WGA). In terms of tissue distribution, expressed in thymus, spleen, bone marrow, kidney, brain and testis, but hardly in all other tissues or in whole embryos during development.

The protein localises to the nucleus. Its subcellular location is the nuclear pore complex. Functionally, part of the nuclear pore complex. Has a critical role in nucleocytoplasmic transport. May serve as a docking site in the receptor-mediated import of substrates across the nuclear pore complex. (Microbial infection) Required for capsid disassembly of the human adenovirus 5 (HadV-5) leading to release of the viral genome to the nucleus (in vitro). The sequence is that of Nuclear pore complex protein Nup214 (NUP214) from Homo sapiens (Human).